Reading from the N-terminus, the 301-residue chain is 4-diphosphocytidyl-2-C-methyl-D-erythritol kinase (301 aa).

Lys-18 is a catalytic residue. Residue 109–119 coordinates ATP; that stretch reads PIASGIGGGSA. The active site involves Asp-151.

Belongs to the GHMP kinase family. IspE subfamily.

The catalysed reaction is 4-CDP-2-C-methyl-D-erythritol + ATP = 4-CDP-2-C-methyl-D-erythritol 2-phosphate + ADP + H(+). It functions in the pathway isoprenoid biosynthesis; isopentenyl diphosphate biosynthesis via DXP pathway; isopentenyl diphosphate from 1-deoxy-D-xylulose 5-phosphate: step 3/6. Catalyzes the phosphorylation of the position 2 hydroxy group of 4-diphosphocytidyl-2C-methyl-D-erythritol. This Rhizobium meliloti (strain 1021) (Ensifer meliloti) protein is 4-diphosphocytidyl-2-C-methyl-D-erythritol kinase.